Reading from the N-terminus, the 569-residue chain is Mitogen-activated protein kinase 7 (569 aa).

The 292-residue stretch at 13-304 (YKIQEIVGKG…AEEALADPYF (292 aa)) folds into the Protein kinase domain. Residues 19 to 27 (VGKGSYGVV) and lysine 42 contribute to the ATP site. Residue aspartate 139 is the Proton acceptor of the active site. The residue at position 175 (threonine 175) is a Phosphothreonine. Positions 175–177 (TDY) match the TXY motif. Residue tyrosine 177 is modified to Phosphotyrosine. A disordered region spans residues 401-420 (TTVHSTSIPPNEGLDATSQV).

This sequence belongs to the protein kinase superfamily. CMGC Ser/Thr protein kinase family. MAP kinase subfamily. Post-translationally, dually phosphorylated on Thr-175 and Tyr-177, which activates the enzyme.

The catalysed reaction is L-seryl-[protein] + ATP = O-phospho-L-seryl-[protein] + ADP + H(+). It carries out the reaction L-threonyl-[protein] + ATP = O-phospho-L-threonyl-[protein] + ADP + H(+). With respect to regulation, activated by threonine and tyrosine phosphorylation. The chain is Mitogen-activated protein kinase 7 (MPK7) from Oryza sativa subsp. japonica (Rice).